The primary structure comprises 364 residues: Cobalt-precorrin-5B C(1)-methyltransferase (364 aa).

The protein belongs to the CbiD family.

The enzyme catalyses Co-precorrin-5B + S-adenosyl-L-methionine = Co-precorrin-6A + S-adenosyl-L-homocysteine. Its pathway is cofactor biosynthesis; adenosylcobalamin biosynthesis; cob(II)yrinate a,c-diamide from sirohydrochlorin (anaerobic route): step 6/10. In terms of biological role, catalyzes the methylation of C-1 in cobalt-precorrin-5B to form cobalt-precorrin-6A. The chain is Cobalt-precorrin-5B C(1)-methyltransferase from Pseudomonas putida (strain ATCC 700007 / DSM 6899 / JCM 31910 / BCRC 17059 / LMG 24140 / F1).